A 204-amino-acid polypeptide reads, in one-letter code: High frequency lysogenization protein HflD homolog (204 aa).

It belongs to the HflD family.

It is found in the cytoplasm. The protein localises to the cell inner membrane. In Aeromonas hydrophila subsp. hydrophila (strain ATCC 7966 / DSM 30187 / BCRC 13018 / CCUG 14551 / JCM 1027 / KCTC 2358 / NCIMB 9240 / NCTC 8049), this protein is High frequency lysogenization protein HflD homolog.